A 476-amino-acid polypeptide reads, in one-letter code: MRQSSESKQKLYLYNTVSRAKELFCSSNDPVKLYTCGPTVYDYAHIGNFRTYVFEDLLKRTLLFFGYSVRHIMNITDVDDKTLAGACKKNISLDAYTAPYIQAFFEDVASLNILPADVYPHATHYIPQMIEAIAKLLDEGIAYVGQDSSVYFSIEKFPTYGKLSQLKLQDLQCCSRVSSDEYDKENLSDFVLWKAYEEKRDGHIYWESPFGKGRPGWHLECSIMAMELLGASIDIHAGGVDNIFPHHENEIAQSESLSHQPFSRYWLHSEHLLVDGKKMSKSLGNFFTLRNLLDRGFSGEEIRYMLLQSHYRMQLNFTEEGLLACRQALKRLRDFISRIESVYPESSHISEDMQQHGEGFLQAFSEAIANDLNIAAALAALFDFIHQTNSTIDQANFTQADANYVLDIMKRINTVLGVIPFSADLEIPDHVKQLVEEREVARSEKNWKQADALRDQVASLGYSIEDAKSGPKVKKL.

Cys36 contacts Zn(2+). Positions 38-48 (PTVYDYAHIGN) match the 'HIGH' region motif. Zn(2+) is bound by residues Cys221, His246, and Glu250. A 'KMSKS' region motif is present at residues 278–282 (KMSKS). Lys281 serves as a coordination point for ATP.

The protein belongs to the class-I aminoacyl-tRNA synthetase family. In terms of assembly, monomer. The cofactor is Zn(2+).

Its subcellular location is the cytoplasm. The catalysed reaction is tRNA(Cys) + L-cysteine + ATP = L-cysteinyl-tRNA(Cys) + AMP + diphosphate. The sequence is that of Cysteine--tRNA ligase from Chlamydia caviae (strain ATCC VR-813 / DSM 19441 / 03DC25 / GPIC) (Chlamydophila caviae).